The following is a 245-amino-acid chain: MSQSTSVLRRNGFTFKQFFVAHDRCAMKVGTDGILLGAWAPVAGVKRCLDIGAGSGLLALMLAQRTSDSVIIDAVELESEAAAQAQENINQSPWAERINVHTADIQQWITQQTVRFDLIISNPPYYQQGVECATPQREQARYTTTLDHPSLLTCAAECITEEGFFCVVLPEQIGNGFTELALSMGWHLRLRTDVAENEARLPHRVLLAFSPQAGECFSDRLVIRGPDQNYSEAYTALTQAFYLFM.

Belongs to the methyltransferase superfamily. tRNA (adenine-N(6)-)-methyltransferase family.

The protein localises to the cytoplasm. It carries out the reaction adenosine(37) in tRNA1(Val) + S-adenosyl-L-methionine = N(6)-methyladenosine(37) in tRNA1(Val) + S-adenosyl-L-homocysteine + H(+). Functionally, specifically methylates the adenine in position 37 of tRNA(1)(Val) (anticodon cmo5UAC). The chain is tRNA1(Val) (adenine(37)-N6)-methyltransferase from Escherichia coli (strain SE11).